The sequence spans 452 residues: Serine--tRNA ligase (452 aa).

251–253 lines the L-serine pocket; it reads TSE. 282–284 lines the ATP pocket; sequence RSE. Residue E305 participates in L-serine binding. 369 to 372 lines the ATP pocket; that stretch reads EISS. Residue S404 participates in L-serine binding.

The protein belongs to the class-II aminoacyl-tRNA synthetase family. Type-1 seryl-tRNA synthetase subfamily. In terms of assembly, homodimer. The tRNA molecule binds across the dimer.

It localises to the cytoplasm. The catalysed reaction is tRNA(Ser) + L-serine + ATP = L-seryl-tRNA(Ser) + AMP + diphosphate + H(+). The enzyme catalyses tRNA(Sec) + L-serine + ATP = L-seryl-tRNA(Sec) + AMP + diphosphate + H(+). It participates in aminoacyl-tRNA biosynthesis; selenocysteinyl-tRNA(Sec) biosynthesis; L-seryl-tRNA(Sec) from L-serine and tRNA(Sec): step 1/1. Functionally, catalyzes the attachment of serine to tRNA(Ser). Is also able to aminoacylate tRNA(Sec) with serine, to form the misacylated tRNA L-seryl-tRNA(Sec), which will be further converted into selenocysteinyl-tRNA(Sec). In Albidiferax ferrireducens (strain ATCC BAA-621 / DSM 15236 / T118) (Rhodoferax ferrireducens), this protein is Serine--tRNA ligase.